A 321-amino-acid chain; its full sequence is Transaldolase (321 aa).

K132 (schiff-base intermediate with substrate) is an active-site residue.

Belongs to the transaldolase family. Type 1 subfamily. As to quaternary structure, homodimer.

The protein resides in the cytoplasm. It catalyses the reaction D-sedoheptulose 7-phosphate + D-glyceraldehyde 3-phosphate = D-erythrose 4-phosphate + beta-D-fructose 6-phosphate. The protein operates within carbohydrate degradation; pentose phosphate pathway; D-glyceraldehyde 3-phosphate and beta-D-fructose 6-phosphate from D-ribose 5-phosphate and D-xylulose 5-phosphate (non-oxidative stage): step 2/3. Transaldolase is important for the balance of metabolites in the pentose-phosphate pathway. This is Transaldolase from Rhizobium rhizogenes (strain K84 / ATCC BAA-868) (Agrobacterium radiobacter).